The primary structure comprises 75 residues: Small ribosomal subunit protein bS18 (75 aa).

It belongs to the bacterial ribosomal protein bS18 family. Part of the 30S ribosomal subunit. Forms a tight heterodimer with protein bS6.

Functionally, binds as a heterodimer with protein bS6 to the central domain of the 16S rRNA, where it helps stabilize the platform of the 30S subunit. The polypeptide is Small ribosomal subunit protein bS18 (Methylobacillus flagellatus (strain ATCC 51484 / DSM 6875 / VKM B-1610 / KT)).